We begin with the raw amino-acid sequence, 193 residues long: MTEYLLILVSTILVNNFVLVQFLGLCPFMGVSNKLETAMGMSLATTFVLTLSSLCSYLAYEYLLAPLGMEFLKTITFILVIAVVVQFTEMVIKKTSPLLYRVLGIFLPLITTNCAVLGVALLNIKKQNDFMESILYGFGAAVGFSLVLTLFSAMRERIAAADVPEPFKGGAIGMITAGLMSLAFLGFTGLVNI.

A run of 6 helical transmembrane segments spans residues 5 to 25, 38 to 58, 65 to 85, 102 to 122, 134 to 154, and 171 to 191; these read LLIL…FLGL, AMGM…CSYL, APLG…AVVV, VLGI…VALL, ILYG…FSAM, and AIGM…TGLV.

The protein belongs to the NqrDE/RnfAE family. As to quaternary structure, the complex is composed of six subunits: RnfA, RnfB, RnfC, RnfD, RnfE and RnfG.

It is found in the cell inner membrane. Its function is as follows. Part of a membrane-bound complex that couples electron transfer with translocation of ions across the membrane. This Hahella chejuensis (strain KCTC 2396) protein is Ion-translocating oxidoreductase complex subunit A.